The sequence spans 791 residues: Outer membrane protein assembly factor BamA (791 aa).

POTRA domains follow at residues 59-130, 131-209, 212-298, 301-383, and 386-459; these read NAIA…VTEK, PRID…VEEG, LYIK…VKEG, YKLG…IRKR, and VYIN…VKEQ.

The protein belongs to the BamA family. As to quaternary structure, part of the Bam complex.

Its subcellular location is the cell outer membrane. In terms of biological role, part of the outer membrane protein assembly complex, which is involved in assembly and insertion of beta-barrel proteins into the outer membrane. The chain is Outer membrane protein assembly factor BamA from Nitratidesulfovibrio vulgaris (strain ATCC 29579 / DSM 644 / CCUG 34227 / NCIMB 8303 / VKM B-1760 / Hildenborough) (Desulfovibrio vulgaris).